Consider the following 271-residue polypeptide: Transmembrane protein 150A (271 aa).

The Cytoplasmic segment spans residues 1–3 (MTG). A helical membrane pass occupies residues 4-24 (WIVLPISLTAFSIPGIWIVYA). Residues 25-75 (MAVMNHHVCPVENWTYNLTCTDDNTKAGTPKSCCTLEDVPLISKCGTYPPE) are Extracellular-facing. N-linked (GlcNAc...) asparagine glycans are attached at residues asparagine 37 and asparagine 41. Residues 76–96 (SCLFSLIGNVGAFMVVIICLL) form a helical membrane-spanning segment. Topologically, residues 97-108 (RYSQVIEISQRS) are cytoplasmic. A helical membrane pass occupies residues 109–129 (WLNTTALIAGCTNAAGLVMVG). Residues 130–140 (NFQVDYAKSLH) are Extracellular-facing. A helical membrane pass occupies residues 141–161 (YIGAGVAFPAGLLFVCLSSIL). The Cytoplasmic segment spans residues 162 to 182 (SYQLAASALDYWLGHLRVSLT). A helical transmembrane segment spans residues 183–203 (IVALISLVLTGVFFIQESFLM). Over 204–205 (QH) the chain is Extracellular. Residues 206-226 (LVAICEWIFVLDILVFYGTFA) traverse the membrane as a helical segment. Topologically, residues 227–271 (YEFGSVSTDTMMAALQSSAARSCKSPGSSSTSTQLHCNAERIAMI) are cytoplasmic.

This sequence belongs to the DRAM/TMEM150 family.

The protein localises to the cell membrane. Regulates localization of phosphatidylinositol 4-kinase (PI4K) to the plasma membrane. The protein is Transmembrane protein 150A (tmem150a) of Xenopus laevis (African clawed frog).